The following is a 279-amino-acid chain: 3-methyl-2-oxobutanoate hydroxymethyltransferase (279 aa).

Residues D44 and D83 each contribute to the Mg(2+) site. Residues 44–45, D83, and K113 each bind 3-methyl-2-oxobutanoate; that span reads DS. E115 contributes to the Mg(2+) binding site. The active-site Proton acceptor is the E182.

The protein belongs to the PanB family. In terms of assembly, homodecamer; pentamer of dimers. Mg(2+) serves as cofactor.

It is found in the cytoplasm. It catalyses the reaction 3-methyl-2-oxobutanoate + (6R)-5,10-methylene-5,6,7,8-tetrahydrofolate + H2O = 2-dehydropantoate + (6S)-5,6,7,8-tetrahydrofolate. The protein operates within cofactor biosynthesis; (R)-pantothenate biosynthesis; (R)-pantoate from 3-methyl-2-oxobutanoate: step 1/2. Catalyzes the reversible reaction in which hydroxymethyl group from 5,10-methylenetetrahydrofolate is transferred onto alpha-ketoisovalerate to form ketopantoate. The sequence is that of 3-methyl-2-oxobutanoate hydroxymethyltransferase from Dehalococcoides mccartyi (strain CBDB1).